Consider the following 447-residue polypeptide: N-succinylarginine dihydrolase (447 aa).

Substrate contacts are provided by residues 19–28 (AGLSFGNEAS), Asn-110, and 137–138 (HR). The active site involves Glu-174. Substrate is bound at residue Arg-212. His-248 is a catalytic residue. Substrate-binding residues include Asp-250 and Asn-359. Cys-365 (nucleophile) is an active-site residue.

Belongs to the succinylarginine dihydrolase family. Homodimer.

The catalysed reaction is N(2)-succinyl-L-arginine + 2 H2O + 2 H(+) = N(2)-succinyl-L-ornithine + 2 NH4(+) + CO2. It participates in amino-acid degradation; L-arginine degradation via AST pathway; L-glutamate and succinate from L-arginine: step 2/5. Functionally, catalyzes the hydrolysis of N(2)-succinylarginine into N(2)-succinylornithine, ammonia and CO(2). In Salmonella typhimurium (strain LT2 / SGSC1412 / ATCC 700720), this protein is N-succinylarginine dihydrolase.